Here is a 250-residue protein sequence, read N- to C-terminus: tRNA-splicing endonuclease subunit Sen2-2 (250 aa).

Active-site residues include Tyr-148, His-156, and Lys-189. Residues Ser-225–Leu-250 are disordered. The span at Ser-234–Leu-250 shows a compositional bias: polar residues.

This sequence belongs to the tRNA-intron endonuclease family. TRNA splicing endonuclease is a heterotetramer composed of SEN2, SEN15, SEN34/LENG5 and SEN54.

Its subcellular location is the nucleus. It catalyses the reaction pretRNA = a 3'-half-tRNA molecule with a 5'-OH end + a 5'-half-tRNA molecule with a 2',3'-cyclic phosphate end + an intron with a 2',3'-cyclic phosphate and a 5'-hydroxyl terminus.. Its function is as follows. Constitutes one of the two catalytic subunit of the tRNA-splicing endonuclease complex, a complex responsible for identification and cleavage of the splice sites in pre-tRNA. It cleaves pre-tRNA at the 5'- and 3'-splice sites to release the intron. The products are an intron and two tRNA half-molecules bearing 2',3'-cyclic phosphate and 5'-OH termini. There are no conserved sequences at the splice sites, but the intron is invariably located at the same site in the gene, placing the splice sites an invariant distance from the constant structural features of the tRNA body. Probably carries the active site for 5'-splice site cleavage. The chain is tRNA-splicing endonuclease subunit Sen2-2 (SEN2) from Arabidopsis thaliana (Mouse-ear cress).